The primary structure comprises 938 residues: MSDYKSTLNLPETGFPMRGDLAKREPGMLARWTDDDLYGIIRAAKKGKKTFILHDGPPYANGSIHIGHSVNKILKDIIVKSKGLAGFDSPYVPGWDCHGLPIELKVEQEYGKPGEKFTAAEFRAKCREYAATQVDGQRKDFIRLGVLGDWSHPYLTMDFKTEANIIRALGKIIGNGHLHKGAKPVHWCVDCRSALAEAEVEYYDKTSPSIDVAFHAADQDAVKAKFGVSSVNGPISLVIWTTTPWTLPANRAISLAPDFDYALVQIDGQALILAKDLVESVMQRLGAADYTILGTVKGAELELLRFTHPFMDFDVPAILGDHVTLDAGTGAVHTAPGHGPDDYVIGQKYGLETANPVGPDGAYLPGTYPTLDGVNVFKANDIVVALLREKGALLHVEKLQHSYPCCWRHKTPIIFRATPQWFVSMDQKGLREQSLKEIKGVQWIPDWGQARIESMVANRPDWCISRQRTWGVPMSLFVHKDTEELHPRAIELMEEVAKRVEVDGIQAWWDLDPKEILGDDADQYVKVPDTLDVWFDSGSTHASVVDVRPEFAGHAADMYLEGSDQHRGWFMSSLMISTAMKGKAPYRQVLTHGFTVDGQGRKMSKSIGNTVSPQDVMNKLGADILRLWVASTDYTGEMAVSDEILKRAADSYRRIRNTARFLLANLNGFDPVKDMVKPEEMVVLDRWAVGCAKAAQDDILKAYEAYDFHEVVQRLMRFCSVEMGSFYLDIIKDRQYTAKADSVARRSCQSALYHIAEALVRWMAPIMSFTADEIWGYLPGDREKYVFTGEWYEGLFGLGETEAMNDAYWDELLKVRGEVNKVIEQARADKKVGGSLEAAVTLYAEPELAAKLTALGDELRFVLLTSGAKVADYAEASADAQQSELLKGLKVALSKAEGEKCPRCWHYTTDVGKVAEHAEICGRCVSNIAGDGEKRKFA.

Residues 58 to 68 (PYANGSIHIGH) carry the 'HIGH' region motif. L-isoleucyl-5'-AMP is bound at residue glutamate 561. Residues 602-606 (KMSKS) carry the 'KMSKS' region motif. Position 605 (lysine 605) interacts with ATP. Cysteine 901, cysteine 904, cysteine 921, and cysteine 924 together coordinate Zn(2+).

This sequence belongs to the class-I aminoacyl-tRNA synthetase family. IleS type 1 subfamily. Monomer. The cofactor is Zn(2+).

The protein resides in the cytoplasm. It carries out the reaction tRNA(Ile) + L-isoleucine + ATP = L-isoleucyl-tRNA(Ile) + AMP + diphosphate. Its function is as follows. Catalyzes the attachment of isoleucine to tRNA(Ile). As IleRS can inadvertently accommodate and process structurally similar amino acids such as valine, to avoid such errors it has two additional distinct tRNA(Ile)-dependent editing activities. One activity is designated as 'pretransfer' editing and involves the hydrolysis of activated Val-AMP. The other activity is designated 'posttransfer' editing and involves deacylation of mischarged Val-tRNA(Ile). The polypeptide is Isoleucine--tRNA ligase (Citrobacter koseri (strain ATCC BAA-895 / CDC 4225-83 / SGSC4696)).